Here is a 247-residue protein sequence, read N- to C-terminus: Pyridoxine 5'-phosphate synthase (247 aa).

Asn-12 serves as a coordination point for 3-amino-2-oxopropyl phosphate. 14–15 (DH) contacts 1-deoxy-D-xylulose 5-phosphate. Arg-23 provides a ligand contact to 3-amino-2-oxopropyl phosphate. The active-site Proton acceptor is the His-48. 1-deoxy-D-xylulose 5-phosphate-binding residues include Arg-50 and His-55. The Proton acceptor role is filled by Glu-75. Thr-105 contacts 1-deoxy-D-xylulose 5-phosphate. Catalysis depends on His-196, which acts as the Proton donor. 3-amino-2-oxopropyl phosphate contacts are provided by residues Gly-197 and 218–219 (GH).

It belongs to the PNP synthase family. As to quaternary structure, homooctamer; tetramer of dimers.

The protein localises to the cytoplasm. The enzyme catalyses 3-amino-2-oxopropyl phosphate + 1-deoxy-D-xylulose 5-phosphate = pyridoxine 5'-phosphate + phosphate + 2 H2O + H(+). The protein operates within cofactor biosynthesis; pyridoxine 5'-phosphate biosynthesis; pyridoxine 5'-phosphate from D-erythrose 4-phosphate: step 5/5. Functionally, catalyzes the complicated ring closure reaction between the two acyclic compounds 1-deoxy-D-xylulose-5-phosphate (DXP) and 3-amino-2-oxopropyl phosphate (1-amino-acetone-3-phosphate or AAP) to form pyridoxine 5'-phosphate (PNP) and inorganic phosphate. The protein is Pyridoxine 5'-phosphate synthase of Pseudomonas fluorescens (strain Pf0-1).